The sequence spans 550 residues: Proteasome-associated ATPase (550 aa).

Positions 9 to 48 (EELARRVASLSAQNERLAQILVEARSKIVGLQQQIDDLAQ) form a coiled coil. Residue 233-238 (GCGKTL) participates in ATP binding. The interval 528-550 (KGEGKNPTPAKAIETPHNTGPYL) is disordered. A docks into pockets in the proteasome alpha-ring region spans residues 549-550 (YL).

Belongs to the AAA ATPase family. In terms of assembly, homohexamer. Assembles into a hexameric ring structure that caps the 20S proteasome core. Strongly interacts with the prokaryotic ubiquitin-like protein Pup through a hydrophobic interface; the interacting region of ARC lies in its N-terminal coiled-coil domain. There is one Pup binding site per ARC hexamer ring. Upon ATP-binding, the C-terminus of ARC interacts with the alpha-rings of the proteasome core, possibly by binding to the intersubunit pockets.

The protein operates within protein degradation; proteasomal Pup-dependent pathway. ATPase which is responsible for recognizing, binding, unfolding and translocation of pupylated proteins into the bacterial 20S proteasome core particle. May be essential for opening the gate of the 20S proteasome via an interaction with its C-terminus, thereby allowing substrate entry and access to the site of proteolysis. Thus, the C-termini of the proteasomal ATPase may function like a 'key in a lock' to induce gate opening and therefore regulate proteolysis. This is Proteasome-associated ATPase from Jonesia denitrificans (strain ATCC 14870 / DSM 20603 / BCRC 15368 / CIP 55.134 / JCM 11481 / NBRC 15587 / NCTC 10816 / Prevot 55134) (Listeria denitrificans).